We begin with the raw amino-acid sequence, 576 residues long: MEYRLIGDNDYNFDPLATILKNRGIEDPKLFVNVDQSSVIHYSKLNNIDKAADCLIRHLNNKNKLFVQVDSDVDGYTSSSIIINYIKKICPKANIHYRIQDGKEHGIFIDTIPDDVDLVIIPDAGSSQFEEHEALNKRGTEIIVIDHHECERVSEHAIVVNNQLSPNYSNKTLTGAGMAYKFCQAIDEKLNKNEAEQFLDLVSIGNIADSADSRNLETRYFMNEGLKKIKHPLLKKLFKKQEFSTKGDKSIQNTQFFINPLINAAIRVGSSEEKDQMMRAFLLSKEKVPYKKRGQSETELVSIHEDTVRILGNLKAKQKRIVDAAGVEIKNRIEEKSLTANKVLIVYIEGILDKSLTGLVANQLAEEYKKPVLLARNDPEKGKDILSGSIRGYDKGFIKDFKKELIDTGLFEFVEGHPNAAGFAIKRQNLILVNKVLNEKFKDINIEEDIQNVDFEIPAKRLRKEFILQLDGYKDYWGYKVEEPLIAITDLEIEVEQIEHLGKKNKTTVKFKHGDIEYIRFKSDENYFNQLTASNGTLVINVIGKAKANEYKGKKTPQIEIYELEVVRTKQKELVF.

At Tyr473 the chain carries Phosphotyrosine.

It belongs to the RecJ family.

Functionally, putative single-stranded-DNA-specific exonuclease. The protein is Putative SPbeta prophage-derived single-strand DNA-specific exonuclease YorK (yorK) of Bacillus subtilis (strain 168).